The sequence spans 577 residues: Arginine--tRNA ligase (577 aa).

The short motif at 122-132 (PNVAKEMHVGH) is the 'HIGH' region element.

It belongs to the class-I aminoacyl-tRNA synthetase family. Monomer.

It is found in the cytoplasm. It catalyses the reaction tRNA(Arg) + L-arginine + ATP = L-arginyl-tRNA(Arg) + AMP + diphosphate. The sequence is that of Arginine--tRNA ligase from Citrobacter koseri (strain ATCC BAA-895 / CDC 4225-83 / SGSC4696).